A 109-amino-acid polypeptide reads, in one-letter code: Cell division protein ZapA (109 aa).

A coiled-coil region spans residues 22-99 (EQQDALNMAA…IEQALLEQGR (78 aa)).

It belongs to the ZapA family. Type 1 subfamily. In terms of assembly, homodimer. Interacts with FtsZ.

Its subcellular location is the cytoplasm. Functionally, activator of cell division through the inhibition of FtsZ GTPase activity, therefore promoting FtsZ assembly into bundles of protofilaments necessary for the formation of the division Z ring. It is recruited early at mid-cell but it is not essential for cell division. In Yersinia enterocolitica serotype O:8 / biotype 1B (strain NCTC 13174 / 8081), this protein is Cell division protein ZapA.